The following is a 101-amino-acid chain: MKTPEDCTGLADIREAIDRIDLDIVQALGRRMDYVKAASRFKASEAAIPAPERVAAMLPERARWAEENGLDAPFVEGLFAQIIHWYIAEQIKYWRQTRGAA.

The Chorismate mutase domain occupies 4 to 94; it reads PEDCTGLADI…WYIAEQIKYW (91 aa). The substrate site is built by arginine 14, arginine 31, lysine 42, and glutamine 90.

As to quaternary structure, dimer of dimers.

It catalyses the reaction isochorismate = salicylate + pyruvate. The catalysed reaction is chorismate = prephenate. The protein operates within siderophore biosynthesis; salicylate biosynthesis. Its activity is regulated as follows. Inhibited by endo-oxabicyclic diacid resembling to the conformation of the transition state. In terms of biological role, involved in the incorporation of salicylate into the siderophore pyochelin. Catalyzes the elimination of the enolpyruvyl side chain from isochorismate to yield salicylate and pyruvate via a rare pericyclic hydrogen transfer mechanism from C2 to C5. PchB also catalyzes the nonphysiological Claisen rearrangement of chorismate to prephenate in which the pyruvylenol tail is transferred from a C3 ether linkage to a C1-C9 linkage. In Pseudomonas aeruginosa (strain ATCC 15692 / DSM 22644 / CIP 104116 / JCM 14847 / LMG 12228 / 1C / PRS 101 / PAO1), this protein is Isochorismate pyruvate lyase.